Here is a 625-residue protein sequence, read N- to C-terminus: Probable potassium transport system protein Kup 2 (625 aa).

12 helical membrane passes run 15–35, 52–72, 98–118, 134–154, 164–184, 203–223, 246–266, 284–304, 336–356, 365–385, 394–414, and 417–437; these read LSFA…LYAF, ILSL…LVIV, GGWL…DGIL, LSPN…FFLF, IGIY…VLGF, IYFF…VFLV, WFAV…AFVL, FLPV…QAII, VYLP…VVIF, AYGI…GIIA, FKVM…AGNI, and LLTG…VMYT.

Belongs to the HAK/KUP transporter (TC 2.A.72) family.

The protein resides in the cell inner membrane. It catalyses the reaction K(+)(in) + H(+)(in) = K(+)(out) + H(+)(out). Transport of potassium into the cell. Likely operates as a K(+):H(+) symporter. This is Probable potassium transport system protein Kup 2 from Legionella pneumophila subsp. pneumophila (strain Philadelphia 1 / ATCC 33152 / DSM 7513).